The sequence spans 245 residues: MNVTLLIPARYGSSRFPGKPLAPINGKPMIQHVYERAALAKGLTAIYVATDDLRIKEAVEAFGGKVVMTDANAASGTDRIEDAITQLGLADDDLVINLQGDQPLIDPISIEQIITLFERHPGEFGMATLGYEITEEHELNDPKHVKMVFDNQFNALYFSRARIPFGRDTDDYPVYKHLGVYAYTREFVRTFNKLPLGRLEDLEKLEQLRALEHGHTIKVAISAFDSPEVDTPEDIRICEARLAVD.

This sequence belongs to the KdsB family.

It is found in the cytoplasm. The enzyme catalyses 8-amino-3,8-dideoxy-alpha-D-manno-octulosonate + CTP = CMP-8-amino-3,8-dideoxy-alpha-D-manno-oct-2-ulosonate + diphosphate. It functions in the pathway bacterial outer membrane biogenesis; lipopolysaccharide biosynthesis. Activates KDO8N (a required 8-carbon sugar) for incorporation into bacterial lipopolysaccharide in the Shewanella genus. The sequence is that of 8-amino-3,8-dideoxy-manno-octulosonate cytidylyltransferase from Shewanella loihica (strain ATCC BAA-1088 / PV-4).